The sequence spans 83 residues: RNA-binding protein Hfq (83 aa).

Residues 9 to 68 (DPYLNALRKERIPVSIFLVNGIKLQGQIESFDQFVILLKNTVSQMVYKHAISTVVPARNV) enclose the Sm domain.

This sequence belongs to the Hfq family. In terms of assembly, homohexamer.

RNA chaperone that binds small regulatory RNA (sRNAs) and mRNAs to facilitate mRNA translational regulation in response to envelope stress, environmental stress and changes in metabolite concentrations. Also binds with high specificity to tRNAs. The protein is RNA-binding protein Hfq of Hahella chejuensis (strain KCTC 2396).